Consider the following 156-residue polypeptide: Jun dimerization protein 2 (156 aa).

The segment at 56–95 is disordered; sequence KRPFDAIKSEDDDDDERKKRRREKNKVAAARCRNRKKERT. Positions 70–133 constitute a bZIP domain; it reads DERKKRRREK…QQLIVMLNLH (64 aa). The interval 72–94 is basic motif; the sequence is RKKRRREKNKVAAARCRNRKKER. Positions 98–126 are leucine-zipper; it reads LQKESERLEMLNSDLKSQIEELKSERQQL.

The protein belongs to the bZIP family. ATF subfamily.

It is found in the nucleus. Its function is as follows. Component of the AP-1 transcription factor that represses transactivation mediated by the Jun family of proteins. This Danio rerio (Zebrafish) protein is Jun dimerization protein 2 (jdp2).